Consider the following 118-residue polypeptide: Large ribosomal subunit protein bL19 (118 aa).

It belongs to the bacterial ribosomal protein bL19 family.

This protein is located at the 30S-50S ribosomal subunit interface and may play a role in the structure and function of the aminoacyl-tRNA binding site. The sequence is that of Large ribosomal subunit protein bL19 from Levilactobacillus brevis (strain ATCC 367 / BCRC 12310 / CIP 105137 / JCM 1170 / LMG 11437 / NCIMB 947 / NCTC 947) (Lactobacillus brevis).